A 569-amino-acid chain; its full sequence is Glutamine--tRNA ligase (569 aa).

The disordered stretch occupies residues 1–23; sequence MSKDPMSKPTPEPAAHSKAGPAV. Residues 50–60 carry the 'HIGH' region motif; that stretch reads PEPNGYLHIGH. ATP-binding positions include 51–53 and 57–63; these read EPN and HIGHAKS. Positions 83 and 228 each coordinate L-glutamine. Residues Thr-247 and 277 to 278 each bind ATP; that span reads RL. Positions 284–288 match the 'KMSKS' region motif; it reads ITSKR.

This sequence belongs to the class-I aminoacyl-tRNA synthetase family. As to quaternary structure, monomer.

Its subcellular location is the cytoplasm. It catalyses the reaction tRNA(Gln) + L-glutamine + ATP = L-glutaminyl-tRNA(Gln) + AMP + diphosphate. In Pseudomonas syringae pv. tomato (strain ATCC BAA-871 / DC3000), this protein is Glutamine--tRNA ligase.